The primary structure comprises 362 residues: Protein mom-2 (362 aa).

An N-terminal signal peptide occupies residues 1–24 (MHINTPVLLAIIYFLVFAPKSADA). Intrachain disulfides connect Cys80/Cys91, Cys129/Cys137, Cys139/Cys167, Cys217/Cys231, and Cys219/Cys226. Residue Asn90 is glycosylated (N-linked (GlcNAc...) asparagine). The O-palmitoleoyl serine; by mom-1 moiety is linked to residue Ser223. A disordered region spans residues 263–282 (TVRSSPSAGSSGRSERFARN). Residues 265–274 (RSSPSAGSSG) are compositionally biased toward low complexity. 6 cysteine pairs are disulfide-bonded: Cys304–Cys322, Cys313–Cys317, Cys321–Cys361, Cys337–Cys352, Cys339–Cys349, and Cys344–Cys345.

Belongs to the Wnt family. Palmitoleoylation is required for efficient binding to frizzled receptors. Depalmitoleoylation leads to Wnt signaling pathway inhibition. In terms of tissue distribution, expressed by anchor cell and vulva precursor cell descendants P5.ppa, P5.ppp, P7.paa and P7.pap. Expressed in the tail and weakly expressed in the vulva and body wall muscles.

The protein localises to the secreted. It localises to the extracellular space. It is found in the extracellular matrix. Its function is as follows. Ligand for members of the frizzled family of seven transmembrane receptors. Required in embryonic development for endoderm specification and the correct positioning and orientation of the mitotic spindles and division planes in blastomere cells. Involved in cleavage axis determination. Binds to receptor tyrosine kinase cam-1. Together with wnt ligand lin-44, plays a role in controlling vulva precursor cell P7.p lineage orientation during vulva development, probably by acting as a ligand for tyrosine kinase receptor lin-18. May act redundantly with other Wnt ligands such as cwn-1 and cwn-2 to control seam cell polarity. This Caenorhabditis elegans protein is Protein mom-2 (mom-2).